The chain runs to 476 residues: Ribulose bisphosphate carboxylase large chain (476 aa).

Substrate-binding residues include Asn-124 and Thr-174. Residue Lys-176 is the Proton acceptor of the active site. Residue Lys-178 participates in substrate binding. Lys-202, Asp-204, and Glu-205 together coordinate Mg(2+). Residue Lys-202 is modified to N6-carboxylysine. His-295 (proton acceptor) is an active-site residue. Substrate is bound by residues Arg-296, His-328, and Ser-380.

The protein belongs to the RuBisCO large chain family. Type I subfamily. Heterohexadecamer of 8 large chains and 8 small chains; disulfide-linked. The disulfide link is formed within the large subunit homodimers. It depends on Mg(2+) as a cofactor. In terms of processing, the disulfide bond which can form in the large chain dimeric partners within the hexadecamer appears to be associated with oxidative stress and protein turnover.

The protein localises to the carboxysome. The enzyme catalyses 2 (2R)-3-phosphoglycerate + 2 H(+) = D-ribulose 1,5-bisphosphate + CO2 + H2O. It catalyses the reaction D-ribulose 1,5-bisphosphate + O2 = 2-phosphoglycolate + (2R)-3-phosphoglycerate + 2 H(+). In terms of biological role, ruBisCO catalyzes two reactions: the carboxylation of D-ribulose 1,5-bisphosphate, the primary event in carbon dioxide fixation, as well as the oxidative fragmentation of the pentose substrate in the photorespiration process. Both reactions occur simultaneously and in competition at the same active site. The polypeptide is Ribulose bisphosphate carboxylase large chain (Nostoc punctiforme (strain ATCC 29133 / PCC 73102)).